The chain runs to 293 residues: Proline iminopeptidase (293 aa).

The AB hydrolase-1 domain occupies 28 to 277 (KPLVLLHGGP…YSRHMPFVEE (250 aa)). Residue S104 is the Nucleophile of the active site. D244 is a catalytic residue. H271 (proton donor) is an active-site residue.

This sequence belongs to the peptidase S33 family.

It catalyses the reaction Release of N-terminal proline from a peptide.. In terms of biological role, releases the N-terminal proline from various substrates. In Clostridioides difficile (strain 630) (Peptoclostridium difficile), this protein is Proline iminopeptidase.